Here is a 41-residue protein sequence, read N- to C-terminus: Large ribosomal subunit protein bL36 (41 aa).

Belongs to the bacterial ribosomal protein bL36 family.

This Sphingopyxis alaskensis (strain DSM 13593 / LMG 18877 / RB2256) (Sphingomonas alaskensis) protein is Large ribosomal subunit protein bL36.